The chain runs to 131 residues: Small ribosomal subunit protein bS6m (131 aa).

It belongs to the bacterial ribosomal protein bS6 family. In terms of assembly, component of the mitochondrial small ribosomal subunit (mt-SSU). Mature yeast 74S mitochondrial ribosomes consist of a small (37S) and a large (54S) subunit. The 37S small subunit contains a 15S ribosomal RNA (15S mt-rRNA) and 34 different proteins. The 54S large subunit contains a 21S rRNA (21S mt-rRNA) and 46 different proteins.

It is found in the mitochondrion. In terms of biological role, component of the mitochondrial ribosome (mitoribosome), a dedicated translation machinery responsible for the synthesis of mitochondrial genome-encoded proteins, including at least some of the essential transmembrane subunits of the mitochondrial respiratory chain. The mitoribosomes are attached to the mitochondrial inner membrane and translation products are cotranslationally integrated into the membrane. The polypeptide is Small ribosomal subunit protein bS6m (MRP17) (Saccharomyces cerevisiae (strain ATCC 204508 / S288c) (Baker's yeast)).